Consider the following 130-residue polypeptide: MGRVRTKTVKRAARQIVEKYYGKLGLDFQYNKKVAEEVALIPSKRMRNKVAGFITHLMRRIQKGPVRGISLKLQEEERERRMDYIPEKSELEVPVIQVDQDTADMLNFLKISLPNLKVMSFNAHEHRERH.

This sequence belongs to the eukaryotic ribosomal protein eS17 family.

This chain is Small ribosomal subunit protein eS17 (RPS17), found in Theileria parva (East coast fever infection agent).